Here is a 293-residue protein sequence, read N- to C-terminus: Ribosomal protein L11 methyltransferase (293 aa).

S-adenosyl-L-methionine contacts are provided by T145, G166, D188, and N230.

It belongs to the methyltransferase superfamily. PrmA family.

It is found in the cytoplasm. It catalyses the reaction L-lysyl-[protein] + 3 S-adenosyl-L-methionine = N(6),N(6),N(6)-trimethyl-L-lysyl-[protein] + 3 S-adenosyl-L-homocysteine + 3 H(+). Its function is as follows. Methylates ribosomal protein L11. This chain is Ribosomal protein L11 methyltransferase, found in Shewanella denitrificans (strain OS217 / ATCC BAA-1090 / DSM 15013).